The sequence spans 312 residues: Acetyl-coenzyme A carboxylase carboxyl transferase subunit alpha (312 aa).

The 262-residue stretch at 25–286 (GDDSAVEILK…GNYIIEKLNE (262 aa)) folds into the CoA carboxyltransferase C-terminal domain.

The protein belongs to the AccA family. In terms of assembly, acetyl-CoA carboxylase is a heterohexamer composed of biotin carboxyl carrier protein (AccB), biotin carboxylase (AccC) and two subunits each of ACCase subunit alpha (AccA) and ACCase subunit beta (AccD).

It is found in the cytoplasm. The enzyme catalyses N(6)-carboxybiotinyl-L-lysyl-[protein] + acetyl-CoA = N(6)-biotinyl-L-lysyl-[protein] + malonyl-CoA. Its pathway is lipid metabolism; malonyl-CoA biosynthesis; malonyl-CoA from acetyl-CoA: step 1/1. Functionally, component of the acetyl coenzyme A carboxylase (ACC) complex. First, biotin carboxylase catalyzes the carboxylation of biotin on its carrier protein (BCCP) and then the CO(2) group is transferred by the carboxyltransferase to acetyl-CoA to form malonyl-CoA. The sequence is that of Acetyl-coenzyme A carboxylase carboxyl transferase subunit alpha from Campylobacter hominis (strain ATCC BAA-381 / DSM 21671 / CCUG 45161 / LMG 19568 / NCTC 13146 / CH001A).